We begin with the raw amino-acid sequence, 234 residues long: Ribosomal RNA small subunit methyltransferase G (234 aa).

Residues glycine 85, phenylalanine 90, and arginine 155 each contribute to the S-adenosyl-L-methionine site.

The protein belongs to the methyltransferase superfamily. RNA methyltransferase RsmG family.

The protein resides in the cytoplasm. The catalysed reaction is guanosine(527) in 16S rRNA + S-adenosyl-L-methionine = N(7)-methylguanosine(527) in 16S rRNA + S-adenosyl-L-homocysteine. Functionally, specifically methylates the N7 position of guanine in position 527 of 16S rRNA. This is Ribosomal RNA small subunit methyltransferase G from Rhodopseudomonas palustris (strain BisB18).